Here is a 256-residue protein sequence, read N- to C-terminus: Calsenilin (256 aa).

The segment at M1–V30 is disordered. Phosphoserine is present on S14. A Glycyl lysine isopeptide (Lys-Gly) (interchain with G-Cter in SUMO1) cross-link involves residue K26. S-palmitoyl cysteine attachment occurs at residues C45 and C46. Phosphoserine is present on residues S60 and S63. One can recognise an EF-hand 1; degenerate domain in the interval L67–P123. K90 participates in a covalent cross-link: Glycyl lysine isopeptide (Lys-Gly) (interchain with G-Cter in SUMO1). EF-hand domains lie at D126–G161, T162–M197, and A210–I245. Ca(2+) contacts are provided by D175, N177, D179, Y181, E186, D223, N225, D227, and E234. The interval E243–I256 is interaction with KCND2.

Belongs to the recoverin family. Binds to DNA as a homomultimer. Dimerization is induced by binding to calcium. Interacts with the C-terminus of PSEN1 and PSEN2 and with PSEN2 CTF subunit. Associates with KCN1. Component of heteromultimeric potassium channels. Identified in potassium channel complexes containing KCND1, KCND2, KCND3, KCNIP1, KCNIP2, KCNIP3, KCNIP4, DPP6 and DPP10. Interacts with KCND2 and KCND3. In terms of processing, palmitoylated. Palmitoylation enhances association with the plasma membrane. Post-translationally, proteolytically cleaved by caspase-3.

The protein resides in the cytoplasm. The protein localises to the cell membrane. Its subcellular location is the endoplasmic reticulum. It is found in the golgi apparatus. It localises to the nucleus. In terms of biological role, regulatory subunit of Kv4/D (Shal)-type voltage-gated rapidly inactivating A-type potassium channels, such as KCND2/Kv4.2 and KCND3/Kv4.3. Modulates channel expression at the cell membrane, gating characteristics, inactivation kinetics and rate of recovery from inactivation in a calcium-dependent and isoform-specific manner. Functionally, may play a role in the regulation of PSEN2 proteolytic processing and apoptosis. Together with PSEN2 involved in modulation of amyloid-beta formation. Its function is as follows. Calcium-dependent transcriptional repressor that binds to the DRE element of genes including PDYN and FOS. Affinity for DNA is reduced upon binding to calcium and enhanced by binding to magnesium. Seems to be involved in nociception. This Bos taurus (Bovine) protein is Calsenilin (KCNIP3).